The following is a 348-amino-acid chain: Nicotinate-nucleotide--dimethylbenzimidazole phosphoribosyltransferase (348 aa).

The active-site Proton acceptor is E316.

This sequence belongs to the CobT family.

It catalyses the reaction 5,6-dimethylbenzimidazole + nicotinate beta-D-ribonucleotide = alpha-ribazole 5'-phosphate + nicotinate + H(+). It participates in nucleoside biosynthesis; alpha-ribazole biosynthesis; alpha-ribazole from 5,6-dimethylbenzimidazole: step 1/2. Functionally, catalyzes the synthesis of alpha-ribazole-5'-phosphate from nicotinate mononucleotide (NAMN) and 5,6-dimethylbenzimidazole (DMB). This is Nicotinate-nucleotide--dimethylbenzimidazole phosphoribosyltransferase from Xanthomonas campestris pv. campestris (strain 8004).